A 389-amino-acid chain; its full sequence is Maintenance of mitochondrial morphology protein 1-1 (389 aa).

Topologically, residues 1–22 (MSQFVLPAVASEGIINWPFLTG) are lumenal. The helical transmembrane segment at 23-43 (FMLGQFSVGLVLLIFVRFFIF) threads the bilayer. The Cytoplasmic segment spans residues 44–389 (SDQTEPDINT…YRSLQTSPRR (346 aa)). An SMP-LTD domain is found at 83–278 (QPESLDWFSV…YPEYQQFELP (196 aa)). 2 disordered regions span residues 283-345 (KTSA…PKFI) and 360-389 (FYEM…SPRR). The span at 330–341 (MSMSSQRPNINN) shows a compositional bias: polar residues.

It belongs to the MMM1 family. As to quaternary structure, homodimer. Component of the ER-mitochondria encounter structure (ERMES) or MDM complex, composed of MMM1, MDM10, MDM12 and MDM34. An MMM1 homodimer associates with one molecule of MDM12 on each side in a pairwise head-to-tail manner, and the SMP-LTD domains of MMM1 and MDM12 generate a continuous hydrophobic tunnel for phospholipid trafficking.

The protein resides in the endoplasmic reticulum membrane. In terms of biological role, component of the ERMES/MDM complex, which serves as a molecular tether to connect the endoplasmic reticulum (ER) and mitochondria. Components of this complex are involved in the control of mitochondrial shape and protein biogenesis, and function in nonvesicular lipid trafficking between the ER and mitochondria. The MDM12-MMM11 subcomplex functions in the major beta-barrel assembly pathway that is responsible for biogenesis of all outer membrane beta-barrel proteins, and acts in a late step after the SAM complex. The MDM10-MDM12-MMM1 subcomplex further acts in the TOM40-specific pathway after the action of the MDM12-MMM1 complex. Essential for establishing and maintaining the structure of mitochondria and maintenance of mtDNA nucleoids. This chain is Maintenance of mitochondrial morphology protein 1-1, found in Yarrowia lipolytica (strain CLIB 122 / E 150) (Yeast).